Here is a 916-residue protein sequence, read N- to C-terminus: MMEDEYQLEYFKSEGLTRNICSSCGKAFWTRNPDRMVCGDAPCEPYQFIGNPIFRAKTVDEMREAYLSFFEKQGHTRIDRYPVAARWRDDIYLTIASIADFQPFVTSGVVPPPANPLTISQPCIRLNDLDSVGRSGRHLTCFEMMAHHAFNSDEKEIYWKDRTVELCDQLLTSLGANKEMVTYKEHPWIGGGNAGPSVEVLIGGLEVATLVFMSLGKQKTEKPPIELEGTPYYPMTLRIVDTGYGLERFVWASQGSPTIYDAVFPEMVSHVMQEAGFGHRLHDSDFIHILGENAKFAGLMDISGQRIFELRQKVAEKIGIPTDKLEKMIAPVESVYAIVDHTRCLSYMLGDCIVPSNAKDGYLARLVLRRTLRMMRELDLPDEKLGDLIERQMKIIGLSKFEQDPDVVMEIVDREVDKYRTTMERGARTVERLAQTYKKKCEKIPLDEIITLYDSHGIPPDMVKDLATSQGAVVDLPDDFYSRIANMHSESEQIQEKNPLFDYLDRLAHLPETRKLFYERPGSMEFEAKVLEIFDGQYVVLDQTLFYPEGGGQPGDTGLFLTPDGLTVRVCDTIKLGESILHRIDGGNVRKGDMIRGILDEDRRLSLMRHHTATHILLHAAKEVLGAHIHQAGAQKGEYSSRIDIRHYKHITPEELKKIEVVANRLVMANSSTSIAWEDRTDAEQKYGFCLYQGGVPPGSRIRVVKVAGDIEACAGTHCAHTGDIGTISIIRVEHVQDGVERLEFAAGIAAIQHKHHQEDLLNRSAEAFSVQVEALPATSKRFFDEWKEQRKEIEKLSSRISELESKNLETVDYNGISVLVKRLDLPNPELVKVATGISDKGGIAILVAGGETARVVVSSGQKGVKAGDVISTVCAVLGGKGGGKPTLAQGGGPDVSKIDDALAAGESFIKSALHV.

Zn(2+)-binding residues include H611, H615, C714, and H718.

It belongs to the class-II aminoacyl-tRNA synthetase family. The cofactor is Zn(2+).

The protein resides in the cytoplasm. The catalysed reaction is tRNA(Ala) + L-alanine + ATP = L-alanyl-tRNA(Ala) + AMP + diphosphate. In terms of biological role, catalyzes the attachment of alanine to tRNA(Ala) in a two-step reaction: alanine is first activated by ATP to form Ala-AMP and then transferred to the acceptor end of tRNA(Ala). Also edits incorrectly charged Ser-tRNA(Ala) and Gly-tRNA(Ala) via its editing domain. The protein is Alanine--tRNA ligase of Methanospirillum hungatei JF-1 (strain ATCC 27890 / DSM 864 / NBRC 100397 / JF-1).